A 61-amino-acid polypeptide reads, in one-letter code: uncharacterized protein (61 aa).

An N-terminal signal peptide occupies residues 1-28 (MHRRARRMPMRPRRSKRVRNRYTMGTFA).

This is an uncharacterized protein from Mycobacterium tuberculosis (strain ATCC 25618 / H37Rv).